Here is a 126-residue protein sequence, read N- to C-terminus: Small ribosomal subunit protein uS11 (126 aa).

Belongs to the universal ribosomal protein uS11 family. In terms of assembly, part of the 30S ribosomal subunit. Interacts with proteins S7 and S18. Binds to IF-3.

Its function is as follows. Located on the platform of the 30S subunit, it bridges several disparate RNA helices of the 16S rRNA. Forms part of the Shine-Dalgarno cleft in the 70S ribosome. The chain is Small ribosomal subunit protein uS11 from Treponema pallidum (strain Nichols).